A 191-amino-acid chain; its full sequence is Ion-translocating oxidoreductase complex subunit B (191 aa).

Residues 1 to 26 (MSSLWIAIAAVSAIALVSGLILGFAA) are hydrophobic. Residues 32-90 (EADPIVERIDALLPQSQCGQCGYPGCRPYAEAVANGEKINRCAPGGEAVMRNIAALLAV) enclose the 4Fe-4S domain. Residues Cys49, Cys52, Cys57, Cys73, Cys116, Cys119, Cys122, Cys126, Cys146, Cys149, Cys152, and Cys156 each contribute to the [4Fe-4S] cluster site. 2 4Fe-4S ferredoxin-type domains span residues 107-136 (QVAL…GATR) and 137-166 (ALHT…LVPV).

It belongs to the 4Fe4S bacterial-type ferredoxin family. RnfB subfamily. In terms of assembly, the complex is composed of six subunits: RnfA, RnfB, RnfC, RnfD, RnfE and RnfG. It depends on [4Fe-4S] cluster as a cofactor.

The protein resides in the cell inner membrane. Its function is as follows. Part of a membrane-bound complex that couples electron transfer with translocation of ions across the membrane. This Edwardsiella ictaluri (strain 93-146) protein is Ion-translocating oxidoreductase complex subunit B.